A 990-amino-acid chain; its full sequence is Leucine--tRNA ligase (990 aa).

Residues 74-85 (PYPSGKGLHVGH) carry the 'HIGH' region motif. The interval 573–602 (LPINLPDVPDYSPKTFDPEDAESDPEAPLS) is disordered. Residues 763-767 (KMGKS) carry the 'KMSKS' region motif. An ATP-binding site is contributed by K766.

Belongs to the class-I aminoacyl-tRNA synthetase family.

It localises to the cytoplasm. It carries out the reaction tRNA(Leu) + L-leucine + ATP = L-leucyl-tRNA(Leu) + AMP + diphosphate. In Bifidobacterium adolescentis (strain ATCC 15703 / DSM 20083 / NCTC 11814 / E194a), this protein is Leucine--tRNA ligase.